A 560-amino-acid chain; its full sequence is Membrane protein insertase YidC (560 aa).

The chain crosses the membrane as a helical span at residues 7 to 27 (ILIVALAIVSYVMVLKWNQDY). Polar residues predominate over residues 38 to 56 (ASSTTTSGLPDTATGNNAA). The tract at residues 38 to 76 (ASSTTTSGLPDTATGNNAAASDDIPRAASDTSAPAETPV) is disordered. The next 4 membrane-spanning stretches (helical) occupy residues 367–387 (IVGNWGWSIIFLTMLIKGIFF), 437–457 (LGGCLPILVQMPVFLSLYWVL), 468–488 (FMLWITDLSIKDPFFILPIIM), and 515–535 (PIIFTFFFLWFPAGLVLYWVV).

The protein belongs to the OXA1/ALB3/YidC family. Type 1 subfamily. Interacts with the Sec translocase complex via SecD. Specifically interacts with transmembrane segments of nascent integral membrane proteins during membrane integration.

It localises to the cell inner membrane. In terms of biological role, required for the insertion and/or proper folding and/or complex formation of integral membrane proteins into the membrane. Involved in integration of membrane proteins that insert both dependently and independently of the Sec translocase complex, as well as at least some lipoproteins. Aids folding of multispanning membrane proteins. The protein is Membrane protein insertase YidC of Pseudomonas fluorescens (strain Pf0-1).